Reading from the N-terminus, the 393-residue chain is S-adenosylmethionine synthase (393 aa).

Glu9 is a binding site for Mg(2+). His15 is a binding site for ATP. K(+) is bound at residue Glu43. Glu56 and Gln99 together coordinate L-methionine. ATP is bound by residues 167 to 169 (DGK), 235 to 238 (SGRF), Asp246, 252 to 253 (RK), Ala269, Lys273, and Lys277. Position 246 (Asp246) interacts with L-methionine. Lys277 is a binding site for L-methionine.

It belongs to the AdoMet synthase family. In terms of assembly, homotetramer. Requires Mn(2+) as cofactor. It depends on Mg(2+) as a cofactor. The cofactor is Co(2+). K(+) is required as a cofactor.

The protein localises to the cytoplasm. It catalyses the reaction L-methionine + ATP + H2O = S-adenosyl-L-methionine + phosphate + diphosphate. It participates in amino-acid biosynthesis; S-adenosyl-L-methionine biosynthesis; S-adenosyl-L-methionine from L-methionine: step 1/1. Functionally, catalyzes the formation of S-adenosylmethionine from methionine and ATP. The reaction comprises two steps that are both catalyzed by the same enzyme: formation of S-adenosylmethionine (AdoMet) and triphosphate, and subsequent hydrolysis of the triphosphate. This chain is S-adenosylmethionine synthase (SAMS), found in Solanum palustre (Non-tuber-performing potato).